A 140-amino-acid chain; its full sequence is Small ribosomal subunit protein uS19 (140 aa).

It belongs to the universal ribosomal protein uS19 family.

Protein S19 forms a complex with S13 that binds strongly to the 16S ribosomal RNA. The sequence is that of Small ribosomal subunit protein uS19 (rps19) from Sulfurisphaera tokodaii (strain DSM 16993 / JCM 10545 / NBRC 100140 / 7) (Sulfolobus tokodaii).